The chain runs to 463 residues: MTIEKNLSDVQQKYADQFQEDVVKSFQTGYGITPDTQIDAGALRREILDDQITMLTWTNEDLIFYRDISRRPAQSTVVKYDQYLRHGNVGHSRFVKEIGVAPVSDPNIRQKTVSMKYVSDTKNMSIASGLVNNIADPSQILTEDAIAVVAKTIEWASFYGDASLTSEVEGEGLEFDGLAKLIDKNNVINAKGNQLTEKHLNEAAVRIGKGFGTATDAYMPIGVHADFVNSILGRQMQLMQDNSGNVNTGYSVNGFYSSRGFIKLHGSTVMENELILDESLQPLPNAPQPAKVTATVETKQKGAFENEEDRAGLSYKVVVNSDDAQSAPSEEVTATVSNVDDGVKLSISVNAMYQQQPQFVSIYRQGKETGMYFLIKRVPVKDAQEDGTIVFVDKNETLPETADVFVGEMSPQVVHLFELLPMMKLPLAQINASITFAVLWYGALALRAPKKWARIKNVRYIAV.

A propeptide spanning residues Met1–Lys24 is cleaved from the precursor.

It is found in the virion. Assembles to form an icosahedral capsid. The chain is Major capsid protein from Staphylococcus aureus.